The chain runs to 571 residues: Urease subunit alpha (571 aa).

A Urease domain is found at 129 to 571 (GGIDSHIHFI…LPMAQRYFLF (443 aa)). Ni(2+)-binding residues include H134, H136, and K217. Residue K217 is modified to N6-carboxylysine. H219 contacts substrate. H246 and H272 together coordinate Ni(2+). The active-site Proton donor is the H320. A Ni(2+)-binding site is contributed by D360.

The protein belongs to the metallo-dependent hydrolases superfamily. Urease alpha subunit family. As to quaternary structure, heterotrimer of UreA (gamma), UreB (beta) and UreC (alpha) subunits. Three heterotrimers associate to form the active enzyme. The cofactor is Ni cation. In terms of processing, carboxylation allows a single lysine to coordinate two nickel ions.

It is found in the cytoplasm. The enzyme catalyses urea + 2 H2O + H(+) = hydrogencarbonate + 2 NH4(+). The protein operates within nitrogen metabolism; urea degradation; CO(2) and NH(3) from urea (urease route): step 1/1. The chain is Urease subunit alpha from Cupriavidus necator (strain ATCC 17699 / DSM 428 / KCTC 22496 / NCIMB 10442 / H16 / Stanier 337) (Ralstonia eutropha).